The following is a 1063-amino-acid chain: Exportin-T (1063 aa).

The protein belongs to the exportin family.

The protein resides in the nucleus. Its subcellular location is the cytoplasm. TRNA nucleus export receptor which facilitates tRNA translocation across the nuclear pore complex. Involved in pre-tRNA splicing, probably by affecting the interaction of pre-tRNA with splicing endonuclease. The chain is Exportin-T (LOS1) from Kluyveromyces lactis (strain ATCC 8585 / CBS 2359 / DSM 70799 / NBRC 1267 / NRRL Y-1140 / WM37) (Yeast).